A 223-amino-acid polypeptide reads, in one-letter code: ATP-dependent dethiobiotin synthetase BioD (223 aa).

Thr16 serves as a coordination point for Mg(2+). The active site involves Lys37. Ser41 is a binding site for substrate. Positions 50 and 111 each coordinate Mg(2+). Residues Asp50, 111–114 (EGAG), and 171–172 (NR) contribute to the ATP site.

Belongs to the dethiobiotin synthetase family. Homodimer. It depends on Mg(2+) as a cofactor.

The protein resides in the cytoplasm. The enzyme catalyses (7R,8S)-7,8-diammoniononanoate + CO2 + ATP = (4R,5S)-dethiobiotin + ADP + phosphate + 3 H(+). The protein operates within cofactor biosynthesis; biotin biosynthesis; biotin from 7,8-diaminononanoate: step 1/2. Functionally, catalyzes a mechanistically unusual reaction, the ATP-dependent insertion of CO2 between the N7 and N8 nitrogen atoms of 7,8-diaminopelargonic acid (DAPA, also called 7,8-diammoniononanoate) to form a ureido ring. The chain is ATP-dependent dethiobiotin synthetase BioD from Anaeromyxobacter dehalogenans (strain 2CP-1 / ATCC BAA-258).